The sequence spans 283 residues: Phosphatidylserine decarboxylase proenzyme (283 aa).

Residues Asp90, His143, and Ser248 each act as charge relay system; for autoendoproteolytic cleavage activity in the active site. The active-site Schiff-base intermediate with substrate; via pyruvic acid; for decarboxylase activity is the Ser248. The residue at position 248 (Ser248) is a Pyruvic acid (Ser); by autocatalysis.

Belongs to the phosphatidylserine decarboxylase family. PSD-B subfamily. Prokaryotic type I sub-subfamily. Heterodimer of a large membrane-associated beta subunit and a small pyruvoyl-containing alpha subunit. Pyruvate is required as a cofactor. In terms of processing, is synthesized initially as an inactive proenzyme. Formation of the active enzyme involves a self-maturation process in which the active site pyruvoyl group is generated from an internal serine residue via an autocatalytic post-translational modification. Two non-identical subunits are generated from the proenzyme in this reaction, and the pyruvate is formed at the N-terminus of the alpha chain, which is derived from the carboxyl end of the proenzyme. The autoendoproteolytic cleavage occurs by a canonical serine protease mechanism, in which the side chain hydroxyl group of the serine supplies its oxygen atom to form the C-terminus of the beta chain, while the remainder of the serine residue undergoes an oxidative deamination to produce ammonia and the pyruvoyl prosthetic group on the alpha chain. During this reaction, the Ser that is part of the protease active site of the proenzyme becomes the pyruvoyl prosthetic group, which constitutes an essential element of the active site of the mature decarboxylase.

Its subcellular location is the cell membrane. The catalysed reaction is a 1,2-diacyl-sn-glycero-3-phospho-L-serine + H(+) = a 1,2-diacyl-sn-glycero-3-phosphoethanolamine + CO2. The protein operates within phospholipid metabolism; phosphatidylethanolamine biosynthesis; phosphatidylethanolamine from CDP-diacylglycerol: step 2/2. Its function is as follows. Catalyzes the formation of phosphatidylethanolamine (PtdEtn) from phosphatidylserine (PtdSer). The protein is Phosphatidylserine decarboxylase proenzyme of Francisella tularensis subsp. holarctica (strain OSU18).